The chain runs to 219 residues: uncharacterized protein (219 aa).

Basic and acidic residues-rich tracts occupy residues methionine 1 to arginine 20, alanine 30 to valine 39, and glutamine 156 to arginine 170. Residues methionine 1–glycine 195 are disordered.

It belongs to the MISP family.

This is an uncharacterized protein from Homo sapiens (Human).